We begin with the raw amino-acid sequence, 76 residues long: Kappa-actitoxin-Avd4l (76 aa).

The first 19 residues, 1–19, serve as a signal peptide directing secretion; sequence MNKALFLCLVVLCAAVVFA. Positions 20 to 31 are excised as a propeptide; the sequence is AEDLQKAKHAPF. 3 disulfide bridges follow: C37/C72, C39/C65, and C55/C73.

It belongs to the sea anemone type 3 (BDS) potassium channel toxin family. Weakly expressed in the ectodermal tissue from the distal and proximal tentacles, body wall, and oral disk.

It localises to the secreted. Its subcellular location is the nematocyst. Its function is as follows. Blocks Kv3 voltage-gated potassium channels. Reduces blood pressure. This chain is Kappa-actitoxin-Avd4l, found in Anemonia viridis (Snakelocks anemone).